A 203-amino-acid chain; its full sequence is Pyridoxine/pyridoxamine 5'-phosphate oxidase (203 aa).

FMN is bound by residues 51–56 (RMVLLK), 66–67 (YT), R72, K73, and Q95. A substrate-binding site is contributed by K56. Substrate contacts are provided by Y113, R117, and S121. FMN contacts are provided by residues 130 to 131 (QS) and W175. 181–183 (RLH) provides a ligand contact to substrate. R185 is a binding site for FMN.

Belongs to the pyridoxamine 5'-phosphate oxidase family. In terms of assembly, homodimer. It depends on FMN as a cofactor.

It carries out the reaction pyridoxamine 5'-phosphate + O2 + H2O = pyridoxal 5'-phosphate + H2O2 + NH4(+). The catalysed reaction is pyridoxine 5'-phosphate + O2 = pyridoxal 5'-phosphate + H2O2. It functions in the pathway cofactor metabolism; pyridoxal 5'-phosphate salvage; pyridoxal 5'-phosphate from pyridoxamine 5'-phosphate: step 1/1. The protein operates within cofactor metabolism; pyridoxal 5'-phosphate salvage; pyridoxal 5'-phosphate from pyridoxine 5'-phosphate: step 1/1. Its function is as follows. Catalyzes the oxidation of either pyridoxine 5'-phosphate (PNP) or pyridoxamine 5'-phosphate (PMP) into pyridoxal 5'-phosphate (PLP). The sequence is that of Pyridoxine/pyridoxamine 5'-phosphate oxidase from Novosphingobium aromaticivorans (strain ATCC 700278 / DSM 12444 / CCUG 56034 / CIP 105152 / NBRC 16084 / F199).